The primary structure comprises 184 residues: MKESGEHGETSKAPLNRGVSKGLSVLDLILRFIAIIGTLASAIAMGTTNETLPFFTQFIRFKAQYSDLPTLTFFVVANSIVCAYLILSLPLSIVHIIRSRAKFSRLLLIFLDAVMLALVTAGASAAAAIVYLAHKGNVRANWLAICQQFDSFCERISGSLIGSFGAMVVLILLILLSAIALARR.

Topologically, residues 1–24 are cytoplasmic; the sequence is MKESGEHGETSKAPLNRGVSKGLS. Residues 25-45 traverse the membrane as a helical segment; sequence VLDLILRFIAIIGTLASAIAM. The Extracellular portion of the chain corresponds to 46 to 72; that stretch reads GTTNETLPFFTQFIRFKAQYSDLPTLT. A glycan (N-linked (GlcNAc...) asparagine) is linked at N49. Residues 73–93 traverse the membrane as a helical segment; it reads FFVVANSIVCAYLILSLPLSI. The Cytoplasmic segment spans residues 94-105; sequence VHIIRSRAKFSR. The helical transmembrane segment at 106–126 threads the bilayer; sequence LLLIFLDAVMLALVTAGASAA. The Extracellular portion of the chain corresponds to 127-159; the sequence is AAIVYLAHKGNVRANWLAICQQFDSFCERISGS. Residues 160-180 traverse the membrane as a helical segment; sequence LIGSFGAMVVLILLILLSAIA. Over 181–184 the chain is Cytoplasmic; it reads LARR.

Belongs to the Casparian strip membrane proteins (CASP) family. Homodimer and heterodimers.

Its subcellular location is the cell membrane. In terms of biological role, regulates membrane-cell wall junctions and localized cell wall deposition. Required for establishment of the Casparian strip membrane domain (CSD) and the subsequent formation of Casparian strips, a cell wall modification of the root endodermis that determines an apoplastic barrier between the intraorganismal apoplasm and the extraorganismal apoplasm and prevents lateral diffusion. The chain is Casparian strip membrane protein 1 from Panicum virgatum (Blackwell switchgrass).